A 341-amino-acid chain; its full sequence is MWPNGTSLGACFRPVNITLQERRAIASPWFAASFCALGLGSNLLALSVLAGARPGAGPRSSFLALLCGLVLTDFLGLLVTGAIVASQHAALLDWRATDPSCRLCYFMGVAMVFFGLCPLLLGAAMASERFVGITRPFSRPTATSRRAWATVGLVWVAAGALGLLPLLGLGRYSVQYPGSWCFLTLGTQRGDVVFGLIFALLGSASVGLSLLLNTVSVATLCRVYHTREATQRPRDCEVEMMVQLVGIMVVATVCWMPLLVFIMQTLLQTPPVMSFSGQLLRATEHQLLIYLRVATWNQILDPWVYILFRRSVLRRLHPRFSSQLQAVSLRRPPAQAMLSGP.

The Extracellular segment spans residues 1–29 (MWPNGTSLGACFRPVNITLQERRAIASPW). N-linked (GlcNAc...) asparagine glycans are attached at residues Asn4 and Asn16. Residues 30–52 (FAASFCALGLGSNLLALSVLAGA) form a helical membrane-spanning segment. Topologically, residues 53 to 65 (RPGAGPRSSFLAL) are cytoplasmic. The chain crosses the membrane as a helical span at residues 66 to 86 (LCGLVLTDFLGLLVTGAIVAS). Topologically, residues 87 to 105 (QHAALLDWRATDPSCRLCY) are extracellular. Cysteines 104 and 181 form a disulfide. A helical membrane pass occupies residues 106–127 (FMGVAMVFFGLCPLLLGAAMAS). Residues 128-147 (ERFVGITRPFSRPTATSRRA) are Cytoplasmic-facing. Residues 148 to 170 (WATVGLVWVAAGALGLLPLLGLG) form a helical membrane-spanning segment. Residues 171 to 191 (RYSVQYPGSWCFLTLGTQRGD) lie on the Extracellular side of the membrane. The helical transmembrane segment at 192–217 (VVFGLIFALLGSASVGLSLLLNTVSV) threads the bilayer. Topologically, residues 218 to 244 (ATLCRVYHTREATQRPRDCEVEMMVQL) are cytoplasmic. Residues 245–268 (VGIMVVATVCWMPLLVFIMQTLLQ) traverse the membrane as a helical segment. Topologically, residues 269–287 (TPPVMSFSGQLLRATEHQL) are extracellular. Residues 288 to 309 (LIYLRVATWNQILDPWVYILFR) form a helical membrane-spanning segment. The Cytoplasmic portion of the chain corresponds to 310-341 (RSVLRRLHPRFSSQLQAVSLRRPPAQAMLSGP). Residue Ser328 is modified to Phosphoserine.

It belongs to the G-protein coupled receptor 1 family. In terms of assembly, interacts with RPGRIP1L. Interacts with RACK1; the interaction regulates TBXA2R cell surface expression.

The protein resides in the cell membrane. Receptor for thromboxane A2 (TXA2), a potent stimulator of platelet aggregation. The activity of this receptor is mediated by a G-protein that activates a phosphatidylinositol-calcium second messenger system. In the kidney, the binding of TXA2 to glomerular TP receptors causes intense vasoconstriction. Activates phospholipase C and adenylyl cyclase. This chain is Thromboxane A2 receptor (Tbxa2r), found in Mus musculus (Mouse).